The sequence spans 794 residues: Zinc finger protein 148 (794 aa).

Residue lysine 6 forms a Glycyl lysine isopeptide (Lys-Gly) (interchain with G-Cter in SUMO2) linkage. Phosphoserine is present on serine 51. Residues lysine 88, lysine 115, and lysine 132 each participate in a glycyl lysine isopeptide (Lys-Gly) (interchain with G-Cter in SUMO2) cross-link. Residues 171–193 (HVCEHCNAAFRTNYHLQRHVFIH) form a C2H2-type 1 zinc finger. Residue threonine 194 is modified to Phosphothreonine. 2 consecutive C2H2-type zinc fingers follow at residues 199–221 (FQCS…EKIH) and 227–249 (FRCD…KRTH). Residue serine 250 is modified to Phosphoserine. The segment at 255 to 278 (YQCEYCLQYFSRTDRVLKHKRMCH) adopts a C2H2-type 4 zinc-finger fold. Lysine 291 is covalently cross-linked (Glycyl lysine isopeptide (Lys-Gly) (interchain with G-Cter in SUMO2)). Positions 298-336 (EEDSGFSTSPKDNSLPKKKRQKTEKKSSGMDKESALDKS) are disordered. Phosphoserine is present on residues serine 301 and serine 306. Lysine 308 participates in a covalent cross-link: Glycyl lysine isopeptide (Lys-Gly) (interchain with G-Cter in SUMO2). Residues 321 to 336 (EKKSSGMDKESALDKS) show a composition bias toward basic and acidic residues. Residue lysine 356 forms a Glycyl lysine isopeptide (Lys-Gly) (interchain with G-Cter in SUMO1); alternate linkage. Residue lysine 356 forms a Glycyl lysine isopeptide (Lys-Gly) (interchain with G-Cter in SUMO2); alternate linkage. Lysine 402 is covalently cross-linked (Glycyl lysine isopeptide (Lys-Gly) (interchain with G-Cter in SUMO2)). Serine 412 carries the phosphoserine modification. Residues lysine 421 and lysine 424 each participate in a glycyl lysine isopeptide (Lys-Gly) (interchain with G-Cter in SUMO2) cross-link. Residues 574 to 588 (NSSEVPEVTPSENVG) show a composition bias toward polar residues. Residues 574-596 (NSSEVPEVTPSENVGSSSQASSS) are disordered. Lysine 607 is modified (N6-acetyllysine). 2 positions are modified to phosphoserine: serine 665 and serine 784.

This sequence belongs to the krueppel C2H2-type zinc-finger protein family. As to quaternary structure, interacts with HNRNPDL. Interacts with the 5FMC complex; the interaction requires association with CHTOP. Interacts with CAVIN1. In terms of processing, sumoylated with SUMO2. Desumoylated by SENP3, resulting in the stimulation of transcription of its target genes.

The protein resides in the nucleus. In terms of biological role, involved in transcriptional regulation. Represses the transcription of a number of genes including gastrin, stromelysin and enolase. Binds to the G-rich box in the enhancer region of these genes. This chain is Zinc finger protein 148 (ZNF148), found in Homo sapiens (Human).